A 270-amino-acid polypeptide reads, in one-letter code: Pyrroline-5-carboxylate reductase (270 aa).

Belongs to the pyrroline-5-carboxylate reductase family.

The protein localises to the cytoplasm. It catalyses the reaction L-proline + NADP(+) = (S)-1-pyrroline-5-carboxylate + NADPH + 2 H(+). It carries out the reaction L-proline + NAD(+) = (S)-1-pyrroline-5-carboxylate + NADH + 2 H(+). It participates in amino-acid biosynthesis; L-proline biosynthesis; L-proline from L-glutamate 5-semialdehyde: step 1/1. Catalyzes the reduction of 1-pyrroline-5-carboxylate (PCA) to L-proline. The chain is Pyrroline-5-carboxylate reductase from Corynebacterium melassecola.